A 372-amino-acid polypeptide reads, in one-letter code: 4-hydroxybenzoate polyprenyltransferase, mitochondrial (372 aa).

The transit peptide at 1–42 (MFIWQRKSILLGRSILGSGRVTVAGIIGSSRKRYTSSSSSSS) directs the protein to the mitochondrion. The next 7 membrane-spanning stretches (helical) occupy residues 92-112 (PVGT…GAMM), 114-134 (GATL…ALVM), 171-191 (ALVF…LLPA), 193-213 (CWWL…FKRF), 229-249 (ALLG…PLYL), 298-318 (IALL…GFIG), and 352-372 (TGLY…FGFL).

This sequence belongs to the UbiA prenyltransferase family. Mg(2+) is required as a cofactor.

It is found in the mitochondrion inner membrane. It carries out the reaction an all-trans-polyprenyl diphosphate + 4-hydroxybenzoate = a 4-hydroxy-3-(all-trans-polyprenyl)benzoate + diphosphate. The protein operates within cofactor biosynthesis; ubiquinone biosynthesis. In terms of biological role, catalyzes the prenylation of para-hydroxybenzoate (PHB) with an all-trans polyprenyl group. Mediates the second step in the final reaction sequence of coenzyme Q (CoQ) biosynthesis, which is the condensation of the polyisoprenoid side chain with PHB, generating the first membrane-bound Q intermediate. The polypeptide is 4-hydroxybenzoate polyprenyltransferase, mitochondrial (Saccharomyces cerevisiae (strain ATCC 204508 / S288c) (Baker's yeast)).